The chain runs to 237 residues: ADTIVAVELDTYPNTDIGDPSYPHIGIDIKSVRSKKTAKWNMQNGKVGTAHIIYNSVGKRLSAVVSYPNGDSATVSYDVDLDNVLPEWVRVGLSATTGLYKETNTILSWSFTSKLKSNSTHETNALHFMFNQFSKDQKDLILQGDATTGRDGNLELTRVSSNGSPQGSSVGRALFYAPVHIWESSAVVASFDATFTFLIKSSDSHPADGIAFFISNIDSSIPSGSTGRLLGLFPDAN.

Positions 8 and 10 each coordinate Mn(2+). Ca(2+) is bound by residues Asp10, Tyr12, Asn14, and Asp19. Residues Tyr12 and Asn14 each contribute to the a carbohydrate site. Residues Asp19 and His24 each coordinate Mn(2+). 99–100 contributes to the a carbohydrate binding site; that stretch reads LY. Asp208 serves as a coordination point for Ca(2+). Residue Arg228 participates in a carbohydrate binding.

Belongs to the leguminous lectin family. As to quaternary structure, homodimer and homotetramer. Oligomerization is pH-dependent with homotetramers forming at pH 4 and above.

D-mannose/D-glucose-binding lectin. Has anti-inflammatory activity in animal models when applied intravenously. Has antinociceptive activity in mice when applied intravenously. This is Lectin alpha chain from Canavalia boliviana.